The sequence spans 220 residues: uncharacterized protein (220 aa).

Belongs to the DadA oxidoreductase family. FAD serves as cofactor.

This is an uncharacterized protein from Halorhodospira halophila (Ectothiorhodospira halophila).